A 189-amino-acid chain; its full sequence is Chitin synthase 1 (189 aa).

This sequence belongs to the chitin synthase family.

It localises to the cell membrane. The catalysed reaction is [(1-&gt;4)-N-acetyl-beta-D-glucosaminyl](n) + UDP-N-acetyl-alpha-D-glucosamine = [(1-&gt;4)-N-acetyl-beta-D-glucosaminyl](n+1) + UDP + H(+). Functionally, polymerizes chitin, a structural polymer of the cell wall and septum, by transferring the sugar moiety of UDP-GlcNAc to the non-reducing end of the growing chitin polymer. This Schizophyllum commune (Split gill fungus) protein is Chitin synthase 1 (CHS1).